Consider the following 445-residue polypeptide: Probable D-serine dehydratase (445 aa).

Residue lysine 119 is modified to N6-(pyridoxal phosphate)lysine.

Belongs to the serine/threonine dehydratase family. DsdA subfamily. The cofactor is pyridoxal 5'-phosphate.

The catalysed reaction is D-serine = pyruvate + NH4(+). This is Probable D-serine dehydratase from Pseudomonas putida (strain GB-1).